A 94-amino-acid polypeptide reads, in one-letter code: Alpha-galactosyl-binding lectin (94 aa).

In terms of assembly, homodimer. Contains three disulfide bonds.

Alpha-galactosyl-binding lectin with preference for galactose-alpha-1,4-galactose. This is Alpha-galactosyl-binding lectin from Lyophyllum decastes (Fried chicken mushroom).